Consider the following 238-residue polypeptide: Ribonuclease PH (238 aa).

Residues arginine 86 and 124–126 each bind phosphate; that span reads GTR.

The protein belongs to the RNase PH family. In terms of assembly, homohexameric ring arranged as a trimer of dimers.

The catalysed reaction is tRNA(n+1) + phosphate = tRNA(n) + a ribonucleoside 5'-diphosphate. In terms of biological role, phosphorolytic 3'-5' exoribonuclease that plays an important role in tRNA 3'-end maturation. Removes nucleotide residues following the 3'-CCA terminus of tRNAs; can also add nucleotides to the ends of RNA molecules by using nucleoside diphosphates as substrates, but this may not be physiologically important. Probably plays a role in initiation of 16S rRNA degradation (leading to ribosome degradation) during starvation. The polypeptide is Ribonuclease PH (Klebsiella pneumoniae (strain 342)).